The chain runs to 94 residues: Small ribosomal subunit protein uS17 (94 aa).

The tract at residues 1-22 (MSEQTSAASTTDRGDRKTRRGY) is disordered.

It belongs to the universal ribosomal protein uS17 family. Part of the 30S ribosomal subunit.

Functionally, one of the primary rRNA binding proteins, it binds specifically to the 5'-end of 16S ribosomal RNA. The protein is Small ribosomal subunit protein uS17 of Kineococcus radiotolerans (strain ATCC BAA-149 / DSM 14245 / SRS30216).